Here is a 253-residue protein sequence, read N- to C-terminus: 5'/3'-nucleotidase SurE (253 aa).

A divalent metal cation contacts are provided by aspartate 8, aspartate 9, serine 39, and asparagine 92.

This sequence belongs to the SurE nucleotidase family. The cofactor is a divalent metal cation.

Its subcellular location is the cytoplasm. The enzyme catalyses a ribonucleoside 5'-phosphate + H2O = a ribonucleoside + phosphate. The catalysed reaction is a ribonucleoside 3'-phosphate + H2O = a ribonucleoside + phosphate. It carries out the reaction [phosphate](n) + H2O = [phosphate](n-1) + phosphate + H(+). Functionally, nucleotidase with a broad substrate specificity as it can dephosphorylate various ribo- and deoxyribonucleoside 5'-monophosphates and ribonucleoside 3'-monophosphates with highest affinity to 3'-AMP. Also hydrolyzes polyphosphate (exopolyphosphatase activity) with the preference for short-chain-length substrates (P20-25). Might be involved in the regulation of dNTP and NTP pools, and in the turnover of 3'-mononucleotides produced by numerous intracellular RNases (T1, T2, and F) during the degradation of various RNAs. In Salmonella paratyphi B (strain ATCC BAA-1250 / SPB7), this protein is 5'/3'-nucleotidase SurE.